The following is a 335-amino-acid chain: Fructose-1,6-bisphosphatase class 1 (335 aa).

4 residues coordinate Mg(2+): Glu-92, Asp-114, Leu-116, and Asp-117. Substrate-binding positions include 117–120 (DGSS), Asn-209, and Lys-275. Position 281 (Glu-281) interacts with Mg(2+).

It belongs to the FBPase class 1 family. In terms of assembly, homotetramer. Mg(2+) serves as cofactor.

It is found in the cytoplasm. The catalysed reaction is beta-D-fructose 1,6-bisphosphate + H2O = beta-D-fructose 6-phosphate + phosphate. It functions in the pathway carbohydrate biosynthesis; gluconeogenesis. The chain is Fructose-1,6-bisphosphatase class 1 from Polaromonas sp. (strain JS666 / ATCC BAA-500).